A 274-amino-acid polypeptide reads, in one-letter code: Large ribosomal subunit protein uL2 (274 aa).

The segment at 224–274 (VAMNPVDHPHGGGEGRTSGGRHPVTPWGIPTKGYKTRRNKRSNKLIVQKRK) is disordered. A compositionally biased stretch (basic residues) spans 257-274 (YKTRRNKRSNKLIVQKRK).

The protein belongs to the universal ribosomal protein uL2 family. Part of the 50S ribosomal subunit. Forms a bridge to the 30S subunit in the 70S ribosome.

Functionally, one of the primary rRNA binding proteins. Required for association of the 30S and 50S subunits to form the 70S ribosome, for tRNA binding and peptide bond formation. It has been suggested to have peptidyltransferase activity; this is somewhat controversial. Makes several contacts with the 16S rRNA in the 70S ribosome. The polypeptide is Large ribosomal subunit protein uL2 (Francisella tularensis subsp. tularensis (strain FSC 198)).